Here is a 529-residue protein sequence, read N- to C-terminus: Membrane-bound lytic murein transglycosylase F (529 aa).

The first 27 residues, 1 to 27, serve as a signal peptide directing secretion; sequence MPIFNLHQLRNFLFIIATTLFLSACQI. Residues 28–287 are non-LT domain; that stretch reads ESKPTSELDQ…RLEEKYIGHI (260 aa). Positions 288–529 are LT domain; it reads GSFDYVDTRA…QATLTTEVQP (242 aa). The active site involves glutamate 332. Residues 510–529 form a disordered region; that stretch reads EALSPDVGVSQATLTTEVQP. A compositionally biased stretch (polar residues) spans 519–529; sequence SQATLTTEVQP.

It in the N-terminal section; belongs to the bacterial solute-binding protein 3 family. In the C-terminal section; belongs to the transglycosylase Slt family.

The protein localises to the cell outer membrane. The enzyme catalyses Exolytic cleavage of the (1-&gt;4)-beta-glycosidic linkage between N-acetylmuramic acid (MurNAc) and N-acetylglucosamine (GlcNAc) residues in peptidoglycan, from either the reducing or the non-reducing ends of the peptidoglycan chains, with concomitant formation of a 1,6-anhydrobond in the MurNAc residue.. In terms of biological role, murein-degrading enzyme that degrades murein glycan strands and insoluble, high-molecular weight murein sacculi, with the concomitant formation of a 1,6-anhydromuramoyl product. Lytic transglycosylases (LTs) play an integral role in the metabolism of the peptidoglycan (PG) sacculus. Their lytic action creates space within the PG sacculus to allow for its expansion as well as for the insertion of various structures such as secretion systems and flagella. The polypeptide is Membrane-bound lytic murein transglycosylase F (Vibrio vulnificus (strain CMCP6)).